A 464-amino-acid polypeptide reads, in one-letter code: MLLENIGYDNKSSLLIVKRLITTMYQQNYLIISANDSKQNPFFGYNKNLHSKILSEGFAIIVEIPFYLRLISSLEGAEIVRFYNLRSIHSIFPFLEEKFPHLNYSADILIPYPAHLEILVQTLRYRVKDASYLHLLRFFLHEYSNCNSLIITNKSISIFSKSNPRFFLFLYNSYICEYESIFLFLRNQSSHLRLTSSGVLFERLCLYRKIEHFAEVFANDFPVIPCFLKDPFMHYVRYQGKSILASKDTPLLMNKWKSYLVNLWQCHFDVWSHAASIRINQLSKHSLDFLSYFSSVRRNPAVVRNQMLENSFPLNNAPNKLDTIVPIIPLIGSLAKAKFCNAVGHPISKLTRADLSDFEIINRFLHICRNLSHYYSGSSKKKNMYRIKYILRLSCVKTLARKHKSTARAFLKRVDSEFFQEFFTEEGGFISLIFPRASFALRRLYSGRVWYLDIIFINGLSNHE.

The protein belongs to the intron maturase 2 family. MatK subfamily.

The protein localises to the plastid. It localises to the chloroplast. In terms of biological role, usually encoded in the trnK tRNA gene intron. Probably assists in splicing its own and other chloroplast group II introns. The protein is Maturase K of Castanea crenata (Japanese chestnut).